Consider the following 143-residue polypeptide: Nucleoside diphosphate kinase (143 aa).

ATP-binding residues include K11, F59, R87, T93, R104, and N114. The Pros-phosphohistidine intermediate role is filled by H117.

Belongs to the NDK family. In terms of assembly, homotetramer. Mg(2+) serves as cofactor.

It localises to the cytoplasm. The enzyme catalyses a 2'-deoxyribonucleoside 5'-diphosphate + ATP = a 2'-deoxyribonucleoside 5'-triphosphate + ADP. It catalyses the reaction a ribonucleoside 5'-diphosphate + ATP = a ribonucleoside 5'-triphosphate + ADP. Its function is as follows. Major role in the synthesis of nucleoside triphosphates other than ATP. The ATP gamma phosphate is transferred to the NDP beta phosphate via a ping-pong mechanism, using a phosphorylated active-site intermediate. This is Nucleoside diphosphate kinase from Tolumonas auensis (strain DSM 9187 / NBRC 110442 / TA 4).